Consider the following 240-residue polypeptide: Biotin--[acetyl-CoA-carboxylase] ligase (240 aa).

In terms of domain architecture, BPL/LPL catalytic spans 1-176; the sequence is MLARTDSTNA…AFARWQAQLD (176 aa). Biotin-binding positions include 7 to 9, Gln-30, 34 to 36, and Lys-102; these read STN and RGR.

Belongs to the biotin--protein ligase family.

The enzyme catalyses biotin + L-lysyl-[protein] + ATP = N(6)-biotinyl-L-lysyl-[protein] + AMP + diphosphate + H(+). Functionally, activates biotin to form biotinyl-5'-adenylate and transfers the biotin moiety to biotin-accepting proteins. In Paracoccus denitrificans, this protein is Biotin--[acetyl-CoA-carboxylase] ligase (birA).